Reading from the N-terminus, the 118-residue chain is Mu-like prophage FluMu tail tube protein (118 aa).

The tract at residues 12-32 is disordered; that stretch reads RLNGKEWPSDNDGTLTPGGKE.

It to phage Mu protein M.

The protein is Mu-like prophage FluMu tail tube protein of Haemophilus influenzae (strain ATCC 51907 / DSM 11121 / KW20 / Rd).